The following is a 556-amino-acid chain: Dihydroxy-acid dehydratase (556 aa).

Aspartate 81 is a Mg(2+) binding site. Cysteine 122 lines the [2Fe-2S] cluster pocket. 2 residues coordinate Mg(2+): aspartate 123 and lysine 124. At lysine 124 the chain carries N6-carboxylysine. Position 196 (cysteine 196) interacts with [2Fe-2S] cluster. Position 444 (glutamate 444) interacts with Mg(2+). Catalysis depends on serine 470, which acts as the Proton acceptor.

This sequence belongs to the IlvD/Edd family. As to quaternary structure, homodimer. It depends on [2Fe-2S] cluster as a cofactor. The cofactor is Mg(2+).

The catalysed reaction is (2R)-2,3-dihydroxy-3-methylbutanoate = 3-methyl-2-oxobutanoate + H2O. The enzyme catalyses (2R,3R)-2,3-dihydroxy-3-methylpentanoate = (S)-3-methyl-2-oxopentanoate + H2O. Its pathway is amino-acid biosynthesis; L-isoleucine biosynthesis; L-isoleucine from 2-oxobutanoate: step 3/4. It functions in the pathway amino-acid biosynthesis; L-valine biosynthesis; L-valine from pyruvate: step 3/4. Functions in the biosynthesis of branched-chain amino acids. Catalyzes the dehydration of (2R,3R)-2,3-dihydroxy-3-methylpentanoate (2,3-dihydroxy-3-methylvalerate) into 2-oxo-3-methylpentanoate (2-oxo-3-methylvalerate) and of (2R)-2,3-dihydroxy-3-methylbutanoate (2,3-dihydroxyisovalerate) into 2-oxo-3-methylbutanoate (2-oxoisovalerate), the penultimate precursor to L-isoleucine and L-valine, respectively. This is Dihydroxy-acid dehydratase from Syntrophotalea carbinolica (strain DSM 2380 / NBRC 103641 / GraBd1) (Pelobacter carbinolicus).